Reading from the N-terminus, the 98-residue chain is Large ribosomal subunit protein eL21 (98 aa).

Positions Met-1–Gln-23 are disordered. The span at Lys-7–Gln-23 shows a compositional bias: basic residues.

This sequence belongs to the eukaryotic ribosomal protein eL21 family.

The protein is Large ribosomal subunit protein eL21 of Nanoarchaeum equitans (strain Kin4-M).